Reading from the N-terminus, the 654-residue chain is Endoplasmic reticulum chaperone BiP (654 aa).

Positions 1–18 (MKLSLVAAMLLLLSAARA) are cleaved as a signal peptide. Positions 1-80 (MKLSLVAAML…EGERLIGDAA (80 aa)) are required for interaction with ELAPOR1. 36–39 (GTTY) is a binding site for ATP. Residue serine 86 is modified to Phosphoserine. Position 96 (lysine 96) interacts with ATP. Lysine 125 bears the N6-acetyllysine mark. The nucleotide-binding (NBD) stretch occupies residues 125–280 (KPYIQVDIGG…KKKTGKDVRK (156 aa)). Position 160 is a 3'-nitrotyrosine (tyrosine 160). Lysine 213 carries the N6-acetyllysine modification. Residue 227–229 (GGT) participates in ATP binding. Lysine 271 carries the post-translational modification N6-acetyllysine. 293-300 (EKAKRALS) contributes to the ATP binding site. Lysine 326 carries the N6-acetyllysine modification. Lysine 352 participates in a covalent cross-link: Glycyl lysine isopeptide (Lys-Gly) (interchain with G-Cter in SUMO2). The residue at position 353 (lysine 353) is an N6-acetyllysine; alternate. Lysine 353 is covalently cross-linked (Glycyl lysine isopeptide (Lys-Gly) (interchain with G-Cter in SUMO1); alternate). An ATP-binding site is contributed by 364-367 (GSTR). The interval 409-419 (QDTGDLVLLDV) is interdomain linker. Positions 420 to 500 (CPLTLGIETV…PRGVPQIEVT (81 aa)) are substrate-binding (SBD). Lysine 447 carries the N6-succinyllysine modification. Arginine 492 bears the Omega-N-methylarginine mark. Threonine 518 is modified (O-AMP-threonine; alternate). Threonine 518 carries the phosphothreonine; alternate modification. Lysine 585 carries the post-translational modification N6,N6,N6-trimethyllysine; by METTL21A; in vitro. At lysine 585 the chain carries N6,N6-dimethyllysine; alternate. Lysine 585 carries the post-translational modification N6-methyllysine; alternate. Position 591 is an N6-methyllysine (lysine 591). Residues 633–654 (KLYGSAGPPPTGEEDTAEKDEL) form a disordered region. Residues threonine 643 and threonine 648 each carry the phosphothreonine modification. A compositionally biased stretch (acidic residues) spans 644–654 (GEEDTAEKDEL). The Prevents secretion from ER signature appears at 651 to 654 (KDEL).

Belongs to the heat shock protein 70 family. Monomer and homooligomer; homooligomerization via the interdomain linker inactivates the chaperone activity and acts as a storage of HSPA5/BiP molecules. Interacts with DNAJC1 (via J domain). Component of an EIF2 complex at least composed of CELF1/CUGBP1, CALR, CALR3, EIF2S1, EIF2S2, HSP90B1 and HSPA5. Part of a large chaperone multiprotein complex comprising DNAJB11, HSP90B1, HSPA5, HYOU, PDIA2, PDIA4, PDIA6, PPIB, SDF2L1, UGGT1 and very small amounts of ERP29, but not, or at very low levels, CALR nor CANX. Interacts with TMEM132A and TRIM21. May form a complex with ERLEC1, OS9, SEL1L and SYVN1. Interacts with DNAJC10. Interacts with DNAJB9/ERdj4; leading to recruit HSPA5/BiP to ERN1/IRE1. Interacts with ERN1/IRE1 (via luminal domain); the interaction takes place following interaction with DNAJB9/ERdj4 and leads to inactivate ERN1/IRE1, the interaction also competitively inhibits ERN1 interaction with MANF. Interacts directly with MANF (via SAP domain); the interaction inhibits ATP binding to HSPA5/BiP and subsequent nucleotide exchange. Interacts with EIF2AK3/PERK (via luminal domain); interaction leads to inactivate EIF2AK3/PERK. Interacts with MX1. Interacts with METTL23. Interacts with CEMIP; the interaction induces calcium leakage from the endoplasmic reticulum and cell migration. Interacts with PCSK4 form; the interaction takes place in the endoplasmic reticulum. Interacts with CIPC. Interacts with CCDC88B (via C-terminus); the interaction opposes ERN1-mediated JNK activation, protecting against apoptosis. Interacts with INPP5K; necessary for INPP5K localization at the endoplasmic reticulum. Interacts with MANF; the interaction is direct. Interacts with LOXL2; leading to activate the ERN1/IRE1-XBP1 pathway of the unfolded protein response. Interacts with CLU under stressed condition; interaction increases CLU protein stability; facilitates its retrotranslocation and redistribution to the mitochondria; cooperatively suppress stress-induced apoptosis by stabilizing mitochondrial membrane integrity. Interacts with CCDC47. Interacts with CLN3. Interacts with ELAPOR1; may regulate the function of HSPA5 in apoptosis and cell proliferation. Interacts with CASP7. Interacts with ILDR2; the interaction stabilizes ILDR2 expression. Interacts with ADAM7. As to quaternary structure, (Microbial infection) Interacts with Japanese encephalitis virus envelope protein E. In terms of assembly, (Microbial infection) Interacts with R.delemar invasin CotH3 on the surface of nasal epithelial cells. Interacts with R.delemar invasin CotH2. (Microbial infection) Interacts with Zika virus envelope protein E and non-structural protein 1 in a chaperone-client manner. AMPylated by FICD. In unstressed cells, AMPylation at Thr-518 by FICD inactivates the chaperome activity: AMPylated form is locked in a relatively inert state and only weakly stimulated by J domain-containing proteins. In response to endoplasmic reticulum stress, de-AMPylation by the same protein, FICD, restores the chaperone activity.

The protein resides in the endoplasmic reticulum lumen. Its subcellular location is the melanosome. The protein localises to the cytoplasm. It localises to the cell surface. The enzyme catalyses ATP + H2O = ADP + phosphate + H(+). The chaperone activity is regulated by ATP-induced allosteric coupling of the nucleotide-binding (NBD) and substrate-binding (SBD) domains. In the ADP-bound and nucleotide-free (apo) states, the two domains have little interaction. In contrast, in the ATP-bound state the two domains are tightly coupled, which results in drastically accelerated kinetics in both binding and release of polypeptide substrates. J domain-containing co-chaperones (DNAJB9/ERdj4 or DNAJC10/ERdj5) stimulate the ATPase activity and are required for efficient substrate recognition by HSPA5/BiP. Homooligomerization inactivates participating HSPA5/BiP protomers and probably act as reservoirs to store HSPA5/BiP molecules when they are not needed by the cell. Its function is as follows. Endoplasmic reticulum chaperone that plays a key role in protein folding and quality control in the endoplasmic reticulum lumen. Involved in the correct folding of proteins and degradation of misfolded proteins via its interaction with DNAJC10/ERdj5, probably to facilitate the release of DNAJC10/ERdj5 from its substrate. Acts as a key repressor of the EIF2AK3/PERK and ERN1/IRE1-mediated unfolded protein response (UPR). In the unstressed endoplasmic reticulum, recruited by DNAJB9/ERdj4 to the luminal region of ERN1/IRE1, leading to disrupt the dimerization of ERN1/IRE1, thereby inactivating ERN1/IRE1. Also binds and inactivates EIF2AK3/PERK in unstressed cells. Accumulation of misfolded protein in the endoplasmic reticulum causes release of HSPA5/BiP from ERN1/IRE1 and EIF2AK3/PERK, allowing their homodimerization and subsequent activation. Plays an auxiliary role in post-translational transport of small presecretory proteins across endoplasmic reticulum (ER). May function as an allosteric modulator for SEC61 channel-forming translocon complex, likely cooperating with SEC62 to enable the productive insertion of these precursors into SEC61 channel. Appears to specifically regulate translocation of precursors having inhibitory residues in their mature region that weaken channel gating. May also play a role in apoptosis and cell proliferation. In terms of biological role, (Microbial infection) Plays an important role in viral binding to the host cell membrane and entry for several flaviruses such as Dengue virus, Zika virus and Japanese encephalitis virus. Acts as a component of the cellular receptor for Dengue virus serotype 2/DENV-2 on human liver cells. (Microbial infection) Acts as a receptor for CotH proteins expressed by fungi of the order mucorales, the causative agent of mucormycosis, which plays an important role in epithelial cell invasion by the fungi. Acts as a receptor for R.delemar CotH3 in nasal epithelial cells, which may be an early step in rhinoorbital/cerebral mucormycosis (RCM) disease progression. The protein is Endoplasmic reticulum chaperone BiP of Homo sapiens (Human).